The primary structure comprises 309 residues: MADLQATLDSIYTDILPRIGEGKVADYIPELAKIDPRQFGMAIVTVDGQVFRVGDADIAFSIQSISKVFMLTLALGKVGEGLWKRVGREPSGSAFNSIVQLEHESGIPRNPFINAGAIAVTDVVMAGHAPREAIGELLRFVRYLADDESITIDDKVARSETQTGYRNVALANFMRAYRNLDHPVDHVLGVYFHQCALAMSCEQLARAGLFLAARGSNPMTGHSVVSPKRARRINALMLTCGHYDGSGDFAYHVGLPGKSGVGGGIFAVAPGIASIAVWSPGLNKVGNSQLGAVALEMLAARTGWSVFGD.

Residues S64, N114, E160, N167, Y191, Y243, and V261 each contribute to the substrate site.

Belongs to the glutaminase family. As to quaternary structure, homotetramer.

It catalyses the reaction L-glutamine + H2O = L-glutamate + NH4(+). The protein is Thermolabile glutaminase (glsA) of Rhizobium etli (strain ATCC 51251 / DSM 11541 / JCM 21823 / NBRC 15573 / CFN 42).